The following is a 3412-amino-acid chain: Genome polyprotein (3412 aa).

The interval 2 to 15 (SKKPGKPGRNRVVN) is interaction with host EXOC1. The Cytoplasmic segment spans residues 2 to 108 (SKKPGKPGRN…PSKKRGGTRS (107 aa)). Residues 37–72 (LLDGRGPVRFILAILTFFRFTALQPTEALKRRWRAV) form a hydrophobic; homodimerization of capsid protein C region. The propeptide at 104-121 (GGTRSLLGLAALIGLASS) is ER anchor for the capsid protein C, removed in mature form by serine protease NS3. A helical membrane pass occupies residues 109–129 (LLGLAALIGLASSLQLSTYQG). The Extracellular segment spans residues 130–247 (KVLMSINKTD…TTKYLTKVEN (118 aa)). Residue asparagine 136 is glycosylated (N-linked (GlcNAc...) asparagine; by host). A helical membrane pass occupies residues 248–268 (WVLRNPGYALVALAIGWMLGS). Over 269 to 273 (NNTQR) the chain is Cytoplasmic. Residues 274–288 (VVFVIMLMLIAPAYS) traverse the membrane as a helical segment. The Extracellular portion of the chain corresponds to 289–741 (FNCLGTSNRD…QVFGGAFRTL (453 aa)). Cystine bridges form between cysteine 291–cysteine 318, cysteine 348–cysteine 404, cysteine 348–cysteine 409, cysteine 362–cysteine 393, cysteine 380–cysteine 404, cysteine 380–cysteine 409, cysteine 478–cysteine 576, and cysteine 593–cysteine 624. The tract at residues 386-399 (DRGWGNGCGLFGKG) is fusion peptide. The chain crosses the membrane as a helical span at residues 742-762 (FGGMSWITQGLLGALLLWMGL). At 763–768 (QARDRS) the chain is on the cytoplasmic side. A helical transmembrane segment spans residues 769–789 (ISLTLLAVGGILIFLATSVQA). The Extracellular portion of the chain corresponds to 790-1214 (DSGCAIDLQR…AFAEMNTGGD (425 aa)). 2 cysteine pairs are disulfide-bonded: cysteine 793/cysteine 804 and cysteine 844/cysteine 932. Residues asparagine 919, asparagine 964, and asparagine 996 are each glycosylated (N-linked (GlcNAc...) asparagine; by host). Cystine bridges form between cysteine 968–cysteine 1012, cysteine 1069–cysteine 1118, cysteine 1080–cysteine 1101, cysteine 1080–cysteine 1102, cysteine 1101–cysteine 1105, and cysteine 1102–cysteine 1105. Residues 1215 to 1235 (VIHLALVAVFKVQPAFLAGLF) traverse the membrane as a helical segment. Topologically, residues 1236-1245 (LRMQWSNQEN) are cytoplasmic. The chain crosses the membrane as a helical span at residues 1246 to 1266 (ILMVIGAAFLQMAANDLKLEV). Residues 1267–1288 (LPILNAMSIAWMLIRAMKEGKV) lie on the Lumenal side of the membrane. The chain crosses the membrane as a helical span at residues 1289–1303 (AMYALPILCALTPGM). Residue arginine 1304 is a topological domain, cytoplasmic. Residues 1305–1325 (MAGLDVIRCLLLIIGIVTLLN) traverse the membrane as a helical segment. Residues 1326-1339 (ERRESVAKKKGGYL) lie on the Lumenal side of the membrane. Residues 1340 to 1360 (LAAALCQAGVCSPLIMMGGLI) traverse the membrane as a helical segment. The Cytoplasmic portion of the chain corresponds to 1361–1369 (LAHPNGKRS). Residues 1370–1390 (WPASEVLTGVGLMCALAGGLL) traverse the membrane as a helical segment. Residues 1391–1393 (EFE) are Lumenal-facing. A helical membrane pass occupies residues 1394–1414 (ETSMVVPFAIAGLMYITYTVS). Topologically, residues 1415–1471 (GKAAEMWIEKAADITWEQNAEITGTSPRLDVDLDSHGNFKLLNDPGAPVHLFALRFI) are cytoplasmic. Positions 1422–1461 (IEKAADITWEQNAEITGTSPRLDVDLDSHGNFKLLNDPGA) are interacts with and activates NS3 protease. Positions 1472–1492 (LLGLSARFHWFIPFGVLGFWL) form an intramembrane region, helical. The Cytoplasmic segment spans residues 1493–2167 (LGKHSKRGGA…KEALAELPDS (675 aa)). Residues 1500–1677 (GGALWDVPSP…ERTEEPIPDA (178 aa)) enclose the Peptidase S7 domain. Catalysis depends on charge relay system; for serine protease NS3 activity residues histidine 1550, aspartate 1574, and serine 1634. The region spanning 1680 to 1836 (EEMLRKRKLT…DSNSPILDVE (157 aa)) is the Helicase ATP-binding domain. Positions 1684-1687 (RKRK) are important for RNA-binding. 1693-1700 (LHPGAGKT) lines the ATP pocket. The DEAH box signature appears at 1784-1787 (DEAH). In terms of domain architecture, Helicase C-terminal spans 1847–2011 (GYEWITNFTG…GLVAQMYQPE (165 aa)). The regulates the ATPase activity of NS3 helicase stretch occupies residues 2162-2166 (AELPD). The helical transmembrane segment at 2168–2188 (LETLLLIGMLCVMSMGTFIFL) threads the bilayer. Topologically, residues 2189 to 2193 (MNRKG) are lumenal. An intramembrane region (helical) is located at residues 2194–2214 (VGKMGLGAFVMTLATALLWAA). Residue glutamate 2215 is a topological domain, lumenal. The helical transmembrane segment at 2216-2236 (VPGTQIAGVLLIVFLLMIVLI) threads the bilayer. Topologically, residues 2237–2251 (PEPEKQRSQTDNQLA) are cytoplasmic. Residues 2252 to 2266 (VFLICIMTLMGVVAA) traverse the membrane as a helical segment. Residues 2267 to 2308 (NEMGLLEKTKSDIAKLFGSQPGSVGFATRTTPWDISLDIKPA) lie on the Lumenal side of the membrane. The helical intramembrane region spans 2309 to 2329 (TAWALYAAATMVMTPLIKHLI). The Lumenal segment spans residues 2330 to 2376 (TTQYVNFSLTAIASQAGVLLGLTNGMPFTAMDLSVPLLVLGCWNQMT). Residues 2377–2397 (LPSLAVAVMLLAIHYAFMIPG) traverse the membrane as a helical segment. Residues 2398 to 2440 (WQAEAMRAAQRRTAAGIMKNAVVDGIVATDIPDLSPATPMTEK) lie on the Cytoplasmic side of the membrane. A helical transmembrane segment spans residues 2441 to 2461 (KMGQILLIAAAVLAVLVRPGI). The Lumenal segment spans residues 2462-2466 (CSIKE). Residues 2467–2487 (FGVLGSAALVTLIEGTAGVVW) traverse the membrane as a helical segment. At 2488-3412 (NCTTAVGLCN…IGEEEYRDYM (925 aa)) the chain is on the cytoplasmic side. In terms of domain architecture, mRNA cap 0-1 NS5-type MT spans 2525–2790 (GGGKGATLGE…DVNLGSGTRS (266 aa)). Serine 2580 serves as a coordination point for S-adenosyl-L-methionine. Serine 2580 carries the post-translational modification Phosphoserine. Residue lysine 2585 is the For 2'-O-MTase activity of the active site. 6 residues coordinate S-adenosyl-L-methionine: glycine 2610, tryptophan 2611, threonine 2628, lysine 2629, aspartate 2655, and valine 2656. The active-site For 2'-O-MTase activity is the aspartate 2670. Isoleucine 2671 contacts S-adenosyl-L-methionine. Residues lysine 2706 and glutamate 2742 each act as for 2'-O-MTase activity in the active site. An S-adenosyl-L-methionine-binding site is contributed by tyrosine 2744. The segment covering 2771-2780 (QNRSGPRYEE) has biased composition (basic and acidic residues). The segment at 2771-2791 (QNRSGPRYEEDVNLGSGTRSV) is disordered. Zn(2+)-binding residues include glutamate 2964, histidine 2968, cysteine 2973, and cysteine 2976. One can recognise a RdRp catalytic domain in the interval 3054–3206 (GKMYADDTAG…KPIDDRFATA (153 aa)). Histidine 3241, cysteine 3257, and cysteine 3376 together coordinate Zn(2+).

The protein in the N-terminal section; belongs to the class I-like SAM-binding methyltransferase superfamily. mRNA cap 0-1 NS5-type methyltransferase family. In terms of assembly, homodimer. Interacts (via N-terminus) with host EXOC1 (via C-terminus); this interaction results in EXOC1 degradation through the proteasome degradation pathway. Forms heterodimers with envelope protein E in the endoplasmic reticulum and Golgi. As to quaternary structure, homodimer; in the endoplasmic reticulum and Golgi. Interacts with protein prM. Interacts with non-structural protein 1. In terms of assembly, homodimer; Homohexamer when secreted. Interacts with envelope protein E. NS1 interacts with NS4B. Interacts with host complement protein CFH; this interaction leads to the degradation of C3. Interacts (via N-terminus) with serine protease NS3. As to quaternary structure, forms a heterodimer with serine protease NS3. May form homooligomers. In terms of assembly, forms a heterodimer with NS2B. Interacts with non-structural protein 2A (via N-terminus). Interacts with NS4B. Interacts with unphosphorylated RNA-directed RNA polymerase NS5; this interaction stimulates RNA-directed RNA polymerase NS5 guanylyltransferase activity. Interacts with serine protease NS3. As to quaternary structure, homodimer. Interacts with host STAT2; this interaction inhibits the phosphorylation of the latter, and, when all viral proteins are present (polyprotein), targets STAT2 for degradation. Interacts with serine protease NS3. In terms of processing, specific enzymatic cleavages in vivo yield mature proteins. Cleavages in the lumen of endoplasmic reticulum are performed by host signal peptidase, whereas cleavages in the cytoplasmic side are performed by serine protease NS3. Signal cleavage at the 2K-4B site requires a prior NS3 protease-mediated cleavage at the 4A-2K site. Post-translationally, cleaved in post-Golgi vesicles by a host furin, releasing the mature small envelope protein M, and peptide pr. This cleavage is incomplete as up to 30% of viral particles still carry uncleaved prM. N-glycosylated. In terms of processing, N-glycosylated. The excreted form is glycosylated and this is required for efficient secretion of the protein from infected cells. Post-translationally, phosphorylated on serines residues. This phosphorylation may trigger NS5 nuclear localization.

Its subcellular location is the virion. It localises to the host nucleus. The protein localises to the host cytoplasm. It is found in the host perinuclear region. The protein resides in the secreted. Its subcellular location is the virion membrane. It localises to the host endoplasmic reticulum membrane. The enzyme catalyses Selective hydrolysis of -Xaa-Xaa-|-Yaa- bonds in which each of the Xaa can be either Arg or Lys and Yaa can be either Ser or Ala.. The catalysed reaction is RNA(n) + a ribonucleoside 5'-triphosphate = RNA(n+1) + diphosphate. It carries out the reaction a ribonucleoside 5'-triphosphate + H2O = a ribonucleoside 5'-diphosphate + phosphate + H(+). It catalyses the reaction ATP + H2O = ADP + phosphate + H(+). The enzyme catalyses a 5'-end (5'-triphosphoguanosine)-ribonucleoside in mRNA + S-adenosyl-L-methionine = a 5'-end (N(7)-methyl 5'-triphosphoguanosine)-ribonucleoside in mRNA + S-adenosyl-L-homocysteine. The catalysed reaction is a 5'-end (N(7)-methyl 5'-triphosphoguanosine)-ribonucleoside in mRNA + S-adenosyl-L-methionine = a 5'-end (N(7)-methyl 5'-triphosphoguanosine)-(2'-O-methyl-ribonucleoside) in mRNA + S-adenosyl-L-homocysteine + H(+). Plays a role in virus budding by binding to the cell membrane and gathering the viral RNA into a nucleocapsid that forms the core of a mature virus particle. During virus entry, may induce genome penetration into the host cytoplasm after hemifusion induced by the surface proteins. Can migrate to the cell nucleus where it modulates host functions. Overcomes the anti-viral effects of host EXOC1 by sequestering and degrading the latter through the proteasome degradation pathway. Its function is as follows. Inhibits RNA silencing by interfering with host Dicer. Functionally, prevents premature fusion activity of envelope proteins in trans-Golgi by binding to envelope protein E at pH6.0. After virion release in extracellular space, gets dissociated from E dimers. In terms of biological role, acts as a chaperone for envelope protein E during intracellular virion assembly by masking and inactivating envelope protein E fusion peptide. prM is the only viral peptide matured by host furin in the trans-Golgi network probably to avoid catastrophic activation of the viral fusion activity in acidic Golgi compartment prior to virion release. prM-E cleavage is inefficient, and many virions are only partially matured. These uncleaved prM would play a role in immune evasion. May play a role in virus budding. Exerts cytotoxic effects by activating a mitochondrial apoptotic pathway through M ectodomain. May display a viroporin activity. Its function is as follows. Binds to host cell surface receptor and mediates fusion between viral and cellular membranes. Envelope protein is synthesized in the endoplasmic reticulum in the form of heterodimer with protein prM. They play a role in virion budding in the ER, and the newly formed immature particle is covered with 60 spikes composed of heterodimer between precursor prM and envelope protein E. The virion is transported to the Golgi apparatus where the low pH causes dissociation of PrM-E heterodimers and formation of E homodimers. prM-E cleavage is inefficient, and many virions are only partially matured. These uncleaved prM would play a role in immune evasion. Functionally, involved in immune evasion, pathogenesis and viral replication. Once cleaved off the polyprotein, is targeted to three destinations: the viral replication cycle, the plasma membrane and the extracellular compartment. Essential for viral replication. Required for formation of the replication complex and recruitment of other non-structural proteins to the ER-derived membrane structures. Excreted as a hexameric lipoparticle that plays a role against host immune response. Antagonizing the complement function. Binds to the host macrophages and dendritic cells. Inhibits signal transduction originating from Toll-like receptor 3 (TLR3). In terms of biological role, component of the viral RNA replication complex that functions in virion assembly and antagonizes the host alpha/beta interferon antiviral response. Required cofactor for the serine protease function of NS3. May have membrane-destabilizing activity and form viroporins. Its function is as follows. Displays three enzymatic activities: serine protease, NTPase and RNA helicase. NS3 serine protease, in association with NS2B, performs its autocleavage and cleaves the polyprotein at dibasic sites in the cytoplasm: C-prM, NS2A-NS2B, NS2B-NS3, NS3-NS4A, NS4A-2K and NS4B-NS5. NS3 RNA helicase binds RNA and unwinds dsRNA in the 3' to 5' direction. Functionally, regulates the ATPase activity of the NS3 helicase activity. NS4A allows NS3 helicase to conserve energy during unwinding. In terms of biological role, functions as a signal peptide for NS4B and is required for the interferon antagonism activity of the latter. Induces the formation of ER-derived membrane vesicles where the viral replication takes place. Inhibits interferon (IFN)-induced host STAT1 phosphorylation and nuclear translocation, thereby preventing the establishment of cellular antiviral state by blocking the IFN-alpha/beta pathway. Inhibits STAT2 translocation in the nucleus after IFN-alpha treatment. Its function is as follows. Replicates the viral (+) and (-) RNA genome, and performs the capping of genomes in the cytoplasm. NS5 methylates viral RNA cap at guanine N-7 and ribose 2'-O positions. Besides its role in RNA genome replication, also prevents the establishment of cellular antiviral state by blocking the interferon-alpha/beta (IFN-alpha/beta) signaling pathway. Inhibits host TYK2 and STAT2 phosphorylation, thereby preventing activation of JAK-STAT signaling pathway. This is Genome polyprotein from Agelaius tricolor (Tricolored blackbird).